Here is a 291-residue protein sequence, read N- to C-terminus: Bifunctional protein FolD (291 aa).

Residues 167 to 169, Ser-192, and Ile-233 contribute to the NADP(+) site; that span reads GRS.

The protein belongs to the tetrahydrofolate dehydrogenase/cyclohydrolase family. In terms of assembly, homodimer.

The enzyme catalyses (6R)-5,10-methylene-5,6,7,8-tetrahydrofolate + NADP(+) = (6R)-5,10-methenyltetrahydrofolate + NADPH. It carries out the reaction (6R)-5,10-methenyltetrahydrofolate + H2O = (6R)-10-formyltetrahydrofolate + H(+). It participates in one-carbon metabolism; tetrahydrofolate interconversion. Its function is as follows. Catalyzes the oxidation of 5,10-methylenetetrahydrofolate to 5,10-methenyltetrahydrofolate and then the hydrolysis of 5,10-methenyltetrahydrofolate to 10-formyltetrahydrofolate. This chain is Bifunctional protein FolD, found in Dichelobacter nodosus (strain VCS1703A).